Here is a 347-residue protein sequence, read N- to C-terminus: MQFLDQAKIYLRSGAGGPGAVSFRHEKYIEYGGPDGGNGGKGGDIVFEAVPGLNTLIDFRYTQHFRAARGASGAGSNKTGAGAKDLVIHVPVGTQVLSEDKEEILHDFTKVGERIIFLKGGDGGRGNASYKSSTNRAPRQHGPGWPAQEAWVWLRLKLLADVGLVGLPNAGKSTFLKATTNAHPKIGNYPFTTLHPQLGVVRRHGQEFVLADIPGLIEGASEGIGIGDRFLGHIERCRILLHLIDASGEDPIAAWHEVQNELALYGAGLAEKPQLLALNKIDSVDEETCAELSQALEEASGQKVLLLSGATGQGLDPILDQLITMTGRAIEKAQESSAQTEKIWSPI.

Residues 1 to 159 form the Obg domain; it reads MQFLDQAKIY…AWVWLRLKLL (159 aa). The tract at residues 124–144 is disordered; sequence GRGNASYKSSTNRAPRQHGPG. The region spanning 160-327 is the OBG-type G domain; the sequence is ADVGLVGLPN…ILDQLITMTG (168 aa). GTP-binding positions include 166 to 173, 191 to 195, 212 to 215, 279 to 282, and 308 to 310; these read GLPNAGKS, FTTLH, DIPG, NKID, and SGA. The Mg(2+) site is built by serine 173 and threonine 193.

The protein belongs to the TRAFAC class OBG-HflX-like GTPase superfamily. OBG GTPase family. Monomer. It depends on Mg(2+) as a cofactor.

It localises to the cytoplasm. An essential GTPase which binds GTP, GDP and possibly (p)ppGpp with moderate affinity, with high nucleotide exchange rates and a fairly low GTP hydrolysis rate. Plays a role in control of the cell cycle, stress response, ribosome biogenesis and in those bacteria that undergo differentiation, in morphogenesis control. This chain is GTPase Obg, found in Zymomonas mobilis subsp. mobilis (strain ATCC 31821 / ZM4 / CP4).